Reading from the N-terminus, the 347-residue chain is Ataxin-7-like protein 3 (347 aa).

The SGF11-type zinc finger occupies Cys84–Cys105. The span at Ala116–Asn125 shows a compositional bias: low complexity. The disordered stretch occupies residues Ala116–Lys184. 2 positions are modified to phosphoserine: Ser129 and Ser131. Acidic residues predominate over residues Asp132–Asp141. An SCA7 domain is found at Leu196–Thr263. A compositionally biased stretch (low complexity) spans Asp275 to Ser288. A disordered region spans residues Asp275 to Asn347. Phosphoserine occurs at positions 278, 281, and 326.

This sequence belongs to the SGF11 family. Component of some SAGA transcription coactivator-HAT complexes, at least composed of ATXN7, ATXN7L3, ENY2, GCN5L2, SUPT3H, TAF10, TRRAP and USP22. Within the SAGA complex, ENY2, ATXN7, ATXN7L3, and USP22 form an additional subcomplex of SAGA called the DUB module (deubiquitination module). Interacts directly with ENY2 and USP22.

The protein localises to the nucleus. Its function is as follows. Component of the transcription regulatory histone acetylation (HAT) complex SAGA, a multiprotein complex that activates transcription by remodeling chromatin and mediating histone acetylation and deubiquitination. Within the SAGA complex, participates in a subcomplex that specifically deubiquitinates both histones H2A and H2B. The SAGA complex is recruited to specific gene promoters by activators such as MYC, where it is required for transcription. Required for nuclear receptor-mediated transactivation. Within the complex, it is required to recruit USP22 and ENY2 into the SAGA complex. Regulates H2B monoubiquitination (H2Bub1) levels. Affects subcellular distribution of ENY2, USP22 and ATXN7L3B. The sequence is that of Ataxin-7-like protein 3 (Atxn7l3) from Mus musculus (Mouse).